We begin with the raw amino-acid sequence, 29 residues long: Cytochrome b6-f complex subunit 8 (29 aa).

Residues 3–23 (MVSLAWAALMVVFTFSLSLVV) traverse the membrane as a helical segment.

This sequence belongs to the PetN family. In terms of assembly, the 4 large subunits of the cytochrome b6-f complex are cytochrome b6, subunit IV (17 kDa polypeptide, PetD), cytochrome f and the Rieske protein, while the 4 small subunits are PetG, PetL, PetM and PetN. The complex functions as a dimer.

The protein resides in the plastid. Its subcellular location is the chloroplast thylakoid membrane. Component of the cytochrome b6-f complex, which mediates electron transfer between photosystem II (PSII) and photosystem I (PSI), cyclic electron flow around PSI, and state transitions. The protein is Cytochrome b6-f complex subunit 8 of Cucumis sativus (Cucumber).